The chain runs to 387 residues: S-adenosylmethionine synthase (387 aa).

Residue H17 participates in ATP binding. D19 lines the Mg(2+) pocket. E45 lines the K(+) pocket. Residues E58 and Q101 each contribute to the L-methionine site. Residues 101 to 111 (QSPDIAQGVDR) form a flexible loop region. Residues 168–170 (DAK), 234–235 (RF), D243, 249–250 (RK), A266, and K270 each bind ATP. D243 is a binding site for L-methionine. K274 is a binding site for L-methionine.

It belongs to the AdoMet synthase family. In terms of assembly, homotetramer; dimer of dimers. Mg(2+) serves as cofactor. The cofactor is K(+).

The protein resides in the cytoplasm. It catalyses the reaction L-methionine + ATP + H2O = S-adenosyl-L-methionine + phosphate + diphosphate. It participates in amino-acid biosynthesis; S-adenosyl-L-methionine biosynthesis; S-adenosyl-L-methionine from L-methionine: step 1/1. In terms of biological role, catalyzes the formation of S-adenosylmethionine (AdoMet) from methionine and ATP. The overall synthetic reaction is composed of two sequential steps, AdoMet formation and the subsequent tripolyphosphate hydrolysis which occurs prior to release of AdoMet from the enzyme. This is S-adenosylmethionine synthase from Bordetella petrii (strain ATCC BAA-461 / DSM 12804 / CCUG 43448).